Here is a 160-residue protein sequence, read N- to C-terminus: uncharacterized protein (160 aa).

Positions 26, 28, 50, and 61 each coordinate Zn(2+). The GRF-type; atypical zinc finger occupies 26–69 (CWCGEEIITFTSKTKENPYRRFYRCAIAMKRENEEHLFKWVDEA).

This is an uncharacterized protein from Arabidopsis thaliana (Mouse-ear cress).